The primary structure comprises 253 residues: Protein C1orf43 (253 aa).

Residues 11–31 traverse the membrane as a helical segment; sequence VNVVLVMAYGSLVFVLLFIFV.

Its subcellular location is the membrane. The protein localises to the golgi apparatus. It is found in the mitochondrion. Functionally, general regulator of phagocytosis. Required to uptake Gram negative bacterium by macrophages. The protein is Protein C1orf43 (C1orf43) of Homo sapiens (Human).